We begin with the raw amino-acid sequence, 191 residues long: Ankyrin repeat domain-containing protein 22 (191 aa).

ANK repeat units lie at residues 39–68, 72–100, 101–130, and 134–163; these read NGDT…NVNL, KERT…MPVL, LIGY…EVNA, and YGCT…DPTI.

This chain is Ankyrin repeat domain-containing protein 22 (ANKRD22), found in Homo sapiens (Human).